The chain runs to 867 residues: Rifampicin phosphotransferase (867 aa).

The interval 1-314 is ATP-binding; sequence MKPYVLKFQE…FYIVQSRPIT (314 aa). The ATP site is built by Lys22, Arg117, Gly132, Thr136, Gln183, Glu297, Gln309, and Arg311. A rifampicin-binding region spans residues 327-754; it reads NRVYISVAHQ…TSDGEMINGE (428 aa). Residues Gln336 and Tyr351 each contribute to the rifampicin site. The segment at 767–865 is swivel phosphohistidine; it reads GLPVSSGTVE…INGTEGYIEI (99 aa). The active-site Tele-phosphohistidine intermediate is the His825.

Belongs to the rifampicin phosphotransferase family.

It carries out the reaction rifampicin + ATP + H2O = 21-phosphorifampicin + AMP + phosphate + 2 H(+). Catalyzes the phosphorylation of rifampicin, also known as rifampin (RIF), leading to its inactivation. Confers high level resistance to a variety of clinically used rifamycin antibiotics. Does not show phosphoenolpyruvate (PEP) synthase activity. The chain is Rifampicin phosphotransferase from Listeria monocytogenes serotype 4b (strain F2365).